An 860-amino-acid chain; its full sequence is Tetratricopeptide repeat protein 13 (860 aa).

7 TPR repeats span residues 143–176 (TNEELAIAYVLIGSGLYDEAIRHFSTMLQEEPDL), 216–248 (PEVFEQRAEILSPLGRINEAVNDLTKAIQLQPS), 249–282 (ARLYRHRGTLYFISEDYATAHEDFQQSLELNKNQ), 284–316 (IAMLYKGLTFFHRGLLKEAIESFKEALKQKVDF), 317–350 (IDAYKSLGQAYRELGNFEAATESFQKALLLNQNH), 352–384 (QTLQLRGMMLYHHGSLQEALKNFKRCLQLEPYN), and 386–418 (VCQYMKGLSHVAMGQFYEGIKAQTKVMLNDPLP).

This is Tetratricopeptide repeat protein 13 (TTC13) from Homo sapiens (Human).